The sequence spans 201 residues: MEKFTTLEGVAAPLKIVNVDTDMIIPKQYLKTIKRTGLGTGLFSEMRYKEDGSDNPDFVLNQPAYRNAKIIVAGDNFGCGSSREHAPWALLDFGIRCVISTSFADIFYNNCFKNGILPIVVSKDDLDKLFDDADRGANATLTIDLAAQEIRGPDGGTVKFEIDPFRKRCLLEGLDDIGLTLEKGTQIDTYEGEKKTEQPWL.

It belongs to the LeuD family. LeuD type 1 subfamily. Heterodimer of LeuC and LeuD.

The enzyme catalyses (2R,3S)-3-isopropylmalate = (2S)-2-isopropylmalate. Its pathway is amino-acid biosynthesis; L-leucine biosynthesis; L-leucine from 3-methyl-2-oxobutanoate: step 2/4. Catalyzes the isomerization between 2-isopropylmalate and 3-isopropylmalate, via the formation of 2-isopropylmaleate. This chain is 3-isopropylmalate dehydratase small subunit, found in Azorhizobium caulinodans (strain ATCC 43989 / DSM 5975 / JCM 20966 / LMG 6465 / NBRC 14845 / NCIMB 13405 / ORS 571).